Here is a 251-residue protein sequence, read N- to C-terminus: MAVHLLIVDALNLIRRIHAVQGSPCVETCQHALDQLIMHSQPTHAVAVFDDENRSSGWRHQRLPDYKAGRPPMPEELHNEMPALRAAFEQRGVPCWSASGNEADDLAATLAVKVTQAGHQATIVSTDKGYCQLLSPTLRIRDYFQKRWLDAPFIDKEFGVQPQQLPDYWGLAGISSSKVPGVAGIGPKSATQLLVEFQSLEGIYENLDAVAEKWRKKLETHKEMAFLCRDIARLQTDLHIDGNLQQLRLVR.

A Mg(2+)-binding site is contributed by Asp104. Residues 160 to 249 (VQPQQLPDYW…IDGNLQQLRL (90 aa)) enclose the 5'-3' exonuclease domain. Positions 171, 172, 180, 182, and 185 each coordinate K(+). The interval 184-189 (GIGPKS) is interaction with DNA.

The protein belongs to the Xni family. Mg(2+) serves as cofactor. Requires K(+) as cofactor.

Functionally, has flap endonuclease activity. During DNA replication, flap endonucleases cleave the 5'-overhanging flap structure that is generated by displacement synthesis when DNA polymerase encounters the 5'-end of a downstream Okazaki fragment. This Escherichia coli O45:K1 (strain S88 / ExPEC) protein is Flap endonuclease Xni.